We begin with the raw amino-acid sequence, 334 residues long: tRNA U34 carboxymethyltransferase (334 aa).

Carboxy-S-adenosyl-L-methionine contacts are provided by residues Lys-91, Trp-105, Lys-110, Gly-130, Asp-152 to Thr-154, Ile-181 to Glu-182, Met-196, Tyr-200, and Arg-315.

The protein belongs to the class I-like SAM-binding methyltransferase superfamily. CmoB family. As to quaternary structure, homotetramer.

The enzyme catalyses carboxy-S-adenosyl-L-methionine + 5-hydroxyuridine(34) in tRNA = 5-carboxymethoxyuridine(34) in tRNA + S-adenosyl-L-homocysteine + H(+). In terms of biological role, catalyzes carboxymethyl transfer from carboxy-S-adenosyl-L-methionine (Cx-SAM) to 5-hydroxyuridine (ho5U) to form 5-carboxymethoxyuridine (cmo5U) at position 34 in tRNAs. This Klebsiella pneumoniae subsp. pneumoniae (strain ATCC 700721 / MGH 78578) protein is tRNA U34 carboxymethyltransferase.